The chain runs to 89 residues: Small capsomere-interacting protein (89 aa).

The disordered stretch occupies residues 1 to 31; it reads MTTIRGDDLSNQITQISGSSSKKEEEKKKQQ. Positions 9–18 are enriched in polar residues; that stretch reads LSNQITQISG.

The protein belongs to the herpesviridae small capsomere-interacting protein family. In terms of assembly, interacts with the major capsid protein/MCP.

It localises to the virion. The protein resides in the host nucleus. In terms of biological role, participates in the assembly of the infectious particles by decorating the outer surface of the capsid shell and thus forming a layer between the capsid and the tegument. Complexes composed of the major capsid protein and small capsomere-interacting protein/SCP assemble together in the host cytoplasm and are translocated to the nucleus, where they accumulate and participate in capsid assembly. The sequence is that of Small capsomere-interacting protein from Human herpesvirus 6B (HHV-6 variant B).